The following is a 706-amino-acid chain: Elongation factor G (706 aa).

The region spanning 15 to 291 (LKTRNIGISA…GVLDYLASPV (277 aa)) is the tr-type G domain. GTP is bound by residues 24–31 (AHIDSGKT), 91–95 (DTPGH), and 145–148 (NKLD).

Belongs to the TRAFAC class translation factor GTPase superfamily. Classic translation factor GTPase family. EF-G/EF-2 subfamily.

The protein resides in the cytoplasm. In terms of biological role, catalyzes the GTP-dependent ribosomal translocation step during translation elongation. During this step, the ribosome changes from the pre-translocational (PRE) to the post-translocational (POST) state as the newly formed A-site-bound peptidyl-tRNA and P-site-bound deacylated tRNA move to the P and E sites, respectively. Catalyzes the coordinated movement of the two tRNA molecules, the mRNA and conformational changes in the ribosome. This is Elongation factor G from Leptospira borgpetersenii serovar Hardjo-bovis (strain L550).